The following is a 512-amino-acid chain: Cytochrome P450 monooxygenase gliC (512 aa).

An N-terminal signal peptide occupies residues 1–19 (MAFTLTILVPCMVLALVAA). Residues Asn118, Asn421, and Asn434 are each glycosylated (N-linked (GlcNAc...) asparagine). Residue Cys452 coordinates heme.

It belongs to the cytochrome P450 family. Requires heme as cofactor.

It participates in mycotoxin biosynthesis. Cytochrome P450 monooxygenase; part of the gene cluster that mediates the biosynthesis of gliotoxin, a member of the epipolythiodioxopiperazine (ETP) class of toxins characterized by a disulfide bridged cyclic dipeptide. The first step in gliotoxin biosynthesis is the condensation of serine and phenylalanine to form the cyclo-L-phenylalanyl-L-serine diketopiperazine (DKP) by the NRPS gliP. GliP is also able to produce the DKP cyclo-L-tryptophanyl-L-serine, suggesting that the substrate specificity of the first adenylation (A) domain in gliP is sufficiently relaxed to accommodate both L-Phe and L-Trp. The cytochrome P450 monooxygenase gliC has been shown to catalyze the subsequent hydroxylation of the alpha-carbon of L-Phe in cyclo-L-phenylalanyl-L-serine whereas the second cytochrome P450 enzyme, gliF, is presumably involved in the modification of the DKP side chain. The glutathione S-transferase (GST) gliG then forms a bis-glutathionylated biosynthetic intermediate which is responsible for the sulfurization of gliotoxin. This bis-glutathionylated intermediate is subsequently processed by the gamma-glutamyl cyclotransferase gliK to remove both gamma-glutamyl moieties. Subsequent processing via gliI yields a biosynthetic intermediate, which is N-methylated via the N-methyltransferase gliN, before the gliotoxin oxidoreductase gliT-mediated disulfide bridge closure. GliN-mediated amide methylation confers stability to ETP, damping the spontaneous formation of tri- and tetrasulfides. Intracellular dithiol gliotoxin oxidized by gliT is subsequently effluxed by gliA. Gliotoxin contributes to pathogenesis during invasive aspergillosis. In macrophages and neutrophils, gliotoxin showed inhibition of various different cell functions including cytokine production, antigen presentation, phagocytosis, and production of reactive oxygen species. The protein is Cytochrome P450 monooxygenase gliC of Aspergillus fumigatus (strain ATCC MYA-4609 / CBS 101355 / FGSC A1100 / Af293) (Neosartorya fumigata).